Consider the following 280-residue polypeptide: 2-dehydro-3-deoxyphosphooctonate aldolase (280 aa).

Belongs to the KdsA family.

The protein localises to the cytoplasm. It carries out the reaction D-arabinose 5-phosphate + phosphoenolpyruvate + H2O = 3-deoxy-alpha-D-manno-2-octulosonate-8-phosphate + phosphate. Its pathway is carbohydrate biosynthesis; 3-deoxy-D-manno-octulosonate biosynthesis; 3-deoxy-D-manno-octulosonate from D-ribulose 5-phosphate: step 2/3. The protein operates within bacterial outer membrane biogenesis; lipopolysaccharide biosynthesis. The sequence is that of 2-dehydro-3-deoxyphosphooctonate aldolase from Colwellia psychrerythraea (strain 34H / ATCC BAA-681) (Vibrio psychroerythus).